The chain runs to 103 residues: Probable protease inhibitor Egf0.4b (103 aa).

A signal peptide spans 1–22 (MMSEKFALVLLVACIAFIGIET). The 53-residue stretch at 35-87 (CGENEAYDSMRRGCEERCDDHNPTFCFKFTTVCWCEKGYVRDKSDTCIKVEDC) folds into the TIL domain.

It belongs to the polydnaviridae EGF-like motif protein family.

This Microplitis demolitor bracovirus (isolate Webb) (MdBV) protein is Probable protease inhibitor Egf0.4b (O11).